A 129-amino-acid chain; its full sequence is Small ribosomal subunit protein uS11 (129 aa).

Belongs to the universal ribosomal protein uS11 family. As to quaternary structure, part of the 30S ribosomal subunit. Interacts with proteins S7 and S18. Binds to IF-3.

Located on the platform of the 30S subunit, it bridges several disparate RNA helices of the 16S rRNA. Forms part of the Shine-Dalgarno cleft in the 70S ribosome. The protein is Small ribosomal subunit protein uS11 of Staphylococcus epidermidis (strain ATCC 12228 / FDA PCI 1200).